The chain runs to 169 residues: Hydroperoxy fatty acid reductase gpx1 (169 aa).

The active site involves Cys-41.

This sequence belongs to the glutathione peroxidase family. As to quaternary structure, monomer.

It carries out the reaction a hydroperoxy polyunsaturated fatty acid + NADPH + H(+) = a hydroxy polyunsaturated fatty acid + NADP(+) + H2O. With respect to regulation, mercaptosuccinate, pCMB, and nethylmaleimide act as inhibitors of the catalytic activity. Functionally, hydroperoxy fatty acid reductase essential for the removal of lipid hydroperoxides under normal and stress conditions, leading to the protection of membrane integrity. The polypeptide is Hydroperoxy fatty acid reductase gpx1 (gpx1) (Synechocystis sp. (strain ATCC 27184 / PCC 6803 / Kazusa)).